Consider the following 210-residue polypeptide: Thymidylate kinase (210 aa).

11 to 18 (GLEGAGKS) lines the ATP pocket.

It belongs to the thymidylate kinase family.

The enzyme catalyses dTMP + ATP = dTDP + ADP. Functionally, phosphorylation of dTMP to form dTDP in both de novo and salvage pathways of dTTP synthesis. The sequence is that of Thymidylate kinase from Histophilus somni (strain 129Pt) (Haemophilus somnus).